The primary structure comprises 510 residues: DNA nucleotidylexotransferase (510 aa).

Positions 1 to 22 (MDPLQAVHLGPRKKRPRQLGTP) are disordered. The Nuclear localization signal signature appears at 11 to 17 (PRKKRPR). A BRCT domain is found at 27–124 (PYDIRFRDLV…KPVEMMGRHQ (98 aa)). Serine 134 bears the Phosphoserine mark. The interval 151 to 510 (SQYACQRRTT…DYIEPWERNA (360 aa)) is mediates interaction with DNTTIP2. Residues 258-262 (VGLKT) form an involved in DNA binding region. Residues 333–338 (GFRRGK) and 342–345 (HDVD) contribute to the a 2'-deoxyribonucleoside 5'-triphosphate site. Aspartate 343, aspartate 345, and aspartate 434 together coordinate Mg(2+). An a 2'-deoxyribonucleoside 5'-triphosphate-binding site is contributed by 449–450 (GW).

This sequence belongs to the DNA polymerase type-X family. Interacts with PRP19 and DNTTIP1. Forms a ternary complex with DNTTIP2 and core histone. Released from this complex by PCNA. Interacts with TRERF1. Mg(2+) serves as cofactor. In terms of tissue distribution, isoform TDT-L: Expressed in the thymus, and, at lower levels, in the bone marrow. Detected in both cycling and noncycling pro-B and pre-B cells (at protein level). Isoform TDT-S: Expressed in both cycling and noncycling pro-B, but not pre-B, cells (at protein level). Not detected in mature peripheral or germinal center B cells.

The protein resides in the nucleus. The protein localises to the cytoplasm. It carries out the reaction DNA(n) + a 2'-deoxyribonucleoside 5'-triphosphate = DNA(n+1) + diphosphate. Transferase that catalyzes the nontemplated addition of nucleoside triphosphate to coding ends during V(D)J recombination (N addition). Involved in the generation of diversity in the antigen-binding region of immunoglobulin heavy and light chains and T-cell receptors during B- and T-cell development. Does not act on double-stranded DNA with blunt ends. Functionally, 3'-to-5' DNA exonuclease. Involved in the generation of diversity in the antigen-binding region of immunoglobulin heavy and light chains and T-cell receptors during B- and T-cell development. Acts on single-stranded and double-stranded DNA with 3' or 5' extensions, but not on double-stranded DNA with blunt ends. Attenuates not only isoform TDT-S-catalyzed N addition, but also P (palindromic) addition in coding joins. Lacks terminal transferase activity. The polypeptide is DNA nucleotidylexotransferase (Dntt) (Mus musculus (Mouse)).